The following is a 1324-amino-acid chain: Synaptojanin-1 (1324 aa).

Residues Val-119–Gly-442 form the SAC domain. Residues Ala-475–His-859 form a catalytic region. 2 positions are modified to phosphoserine: Ser-820 and Ser-830. Residues Ser-902–Pro-971 form the RRM domain. Residues Leu-1030–Asn-1324 are disordered. Positions Ala-1080–Leu-1103 are enriched in polar residues. Residues Pro-1108–Ser-1130 show a composition bias toward pro residues. Residues Ala-1138–Asn-1156 show a composition bias toward basic and acidic residues. Arg-1186 bears the Omega-N-methylarginine mark. Thr-1205 carries the post-translational modification Phosphothreonine. Residue Ser-1277 is modified to Phosphoserine. The segment covering Ser-1278–Ala-1292 has biased composition (low complexity).

It belongs to the synaptojanin family. This sequence in the central section; belongs to the inositol 1,4,5-trisphosphate 5-phosphatase family. In terms of assembly, interacts with ASH/GRB2. Interacts with PACSIN1, PACSIN2 and PACSIN3. Interacts with AMPH, SH3GL1, SH3GL2 and SH3GL3. Interacts with MYO1E (via SH3 domain). Interacts with BIN1 and DNM1. Interacts with EPS15. Ubiquitously expressed with highest levels in brain.

It localises to the cytoplasm. It is found in the perinuclear region. The enzyme catalyses a 1,2-diacyl-sn-glycero-3-phospho-(1D-myo-inositol-4,5-bisphosphate) + H2O = a 1,2-diacyl-sn-glycero-3-phospho-(1D-myo-inositol 4-phosphate) + phosphate. Functionally, phosphatase that acts on various phosphoinositides, including phosphatidylinositol 4-phosphate, phosphatidylinositol (4,5)-bisphosphate and phosphatidylinositol (3,4,5)-trisphosphate. Has a role in clathrin-mediated endocytosis. Hydrolyzes PIP2 bound to actin regulatory proteins resulting in the rearrangement of actin filaments downstream of tyrosine kinase and ASH/GRB2. The sequence is that of Synaptojanin-1 (SYNJ1) from Bos taurus (Bovine).